The chain runs to 506 residues: ATP synthase subunit alpha (506 aa).

170–177 serves as a coordination point for ATP; sequence GDRQTGKT.

This sequence belongs to the ATPase alpha/beta chains family. As to quaternary structure, F-type ATPases have 2 components, CF(1) - the catalytic core - and CF(0) - the membrane proton channel. CF(1) has five subunits: alpha(3), beta(3), gamma(1), delta(1), epsilon(1). CF(0) has four main subunits: a(1), b(1), b'(1) and c(9-12).

The protein localises to the cellular thylakoid membrane. It catalyses the reaction ATP + H2O + 4 H(+)(in) = ADP + phosphate + 5 H(+)(out). Functionally, produces ATP from ADP in the presence of a proton gradient across the membrane. The alpha chain is a regulatory subunit. The protein is ATP synthase subunit alpha of Synechococcus sp. (strain WH7803).